The primary structure comprises 130 residues: Small ribosomal subunit protein eS17 (130 aa).

Positions Q74–Y84 are enriched in basic and acidic residues. Residues Q74–T97 are disordered.

The protein belongs to the eukaryotic ribosomal protein eS17 family.

The sequence is that of Small ribosomal subunit protein eS17 (rps-17) from Caenorhabditis elegans.